The chain runs to 145 residues: Deoxyuridine 5'-triphosphate nucleotidohydrolase (145 aa).

Substrate-binding positions include 62–64, N75, 79–81, and K89; these read RSG and TVD.

It belongs to the dUTPase family. It depends on Mg(2+) as a cofactor.

The enzyme catalyses dUTP + H2O = dUMP + diphosphate + H(+). Its pathway is pyrimidine metabolism; dUMP biosynthesis; dUMP from dCTP (dUTP route): step 2/2. Functionally, this enzyme is involved in nucleotide metabolism: it produces dUMP, the immediate precursor of thymidine nucleotides and it decreases the intracellular concentration of dUTP so that uracil cannot be incorporated into DNA. In Helicobacter pylori (strain P12), this protein is Deoxyuridine 5'-triphosphate nucleotidohydrolase.